The primary structure comprises 255 residues: 5-oxoprolinase subunit A (255 aa).

This sequence belongs to the LamB/PxpA family. In terms of assembly, forms a complex composed of PxpA, PxpB and PxpC.

The enzyme catalyses 5-oxo-L-proline + ATP + 2 H2O = L-glutamate + ADP + phosphate + H(+). Catalyzes the cleavage of 5-oxoproline to form L-glutamate coupled to the hydrolysis of ATP to ADP and inorganic phosphate. The polypeptide is 5-oxoprolinase subunit A (Campylobacter jejuni subsp. jejuni serotype O:6 (strain 81116 / NCTC 11828)).